Reading from the N-terminus, the 192-residue chain is Dynein axonemal light chain 1 (192 aa).

LRR repeat units follow at residues 49–70 (NCER…NGLK), 71–92 (NLKI…EAVG), 94–115 (TLEE…HVMK), and 116–137 (KLKV…LKLA). The LRRCT domain maps to 150–192 (NPLEEKYSADGNWIEEATKRLPKLKKLDGNPVIKQEEETEGES).

Belongs to the dynein light chain LC1-type family. As to quaternary structure, interacts with DNAH5, a outer arm dynein heavy chain. Interacts with tubulin located within the A-tubule of the outer doublets in a ATP-independent manner.

The protein localises to the cytoplasm. The protein resides in the cytoskeleton. It is found in the cilium axoneme. Its function is as follows. Part of the multisubunit axonemal ATPase complexes that generate the force for cilia motility and govern beat frequency. Component of the outer arm dynein (ODA). May be involved in a mechanosensory feedback mechanism controlling ODA activity based on external conformational cues by tethering the outer arm dynein heavy chain (DNAH5) to the microtubule within the axoneme. The protein is Dynein axonemal light chain 1 (dnal1) of Danio rerio (Zebrafish).